Consider the following 170-residue polypeptide: MSQKMAKEGPRLSKNQKFSEHFSIHCCPPFTFLNSKREIVDRKYSICKSGCFYQKKEEDWICCACQKTSRRATSPQRPKHQPAASPVVVRAPPAKPKSPLMPAKPRSPPRPAKPRSPSRTERQPRPRPEVRPPPAKQKPPQKSKQPARSSPLRGPGTSRGGSPTRAPRFW.

Residues 69 to 170 (SRRATSPQRP…GSPTRAPRFW (102 aa)) are disordered. Residues 82–92 (PAASPVVVRAP) show a composition bias toward low complexity. Phosphoserine occurs at positions 85, 98, and 107. 2 tandem repeats follow at residues 93–101 (PAKPKSPLM) and 105–110 (PRSPPR). A 3 X 9 AA approximate tandem repeats region spans residues 93-115 (PAKPKSPLMPAKPRSPPRPAKPR). A 3; half-length repeat occupies 111-115 (PAKPR). The span at 118–130 (SRTERQPRPRPEV) shows a compositional bias: basic and acidic residues. Low complexity predominate over residues 138–151 (KPPQKSKQPARSSP).

It is found in the cytoplasm. The protein resides in the perinuclear region. Functionally, may play a role in compacting or stabilizing the myelin sheath possibly by binding the negatively charged acidic phospholipids of the cytoplasmic membrane. This chain is Myelin-associated oligodendrocyte basic protein (Mobp), found in Mus musculus (Mouse).